A 171-amino-acid polypeptide reads, in one-letter code: Co-chaperone protein HscB homolog (171 aa).

One can recognise a J domain in the interval 2–74 (NHFELFGLPL…ISRAEYLLVQ (73 aa)).

Belongs to the HscB family. As to quaternary structure, interacts with HscA and stimulates its ATPase activity.

Co-chaperone involved in the maturation of iron-sulfur cluster-containing proteins. Seems to help targeting proteins to be folded toward HscA. The sequence is that of Co-chaperone protein HscB homolog from Vibrio atlanticus (strain LGP32) (Vibrio splendidus (strain Mel32)).